The primary structure comprises 532 residues: Glucose-6-phosphate isomerase (532 aa).

The active-site Proton donor is glutamate 322. Catalysis depends on residues histidine 351 and lysine 457.

It belongs to the GPI family.

The protein resides in the cytoplasm. It catalyses the reaction alpha-D-glucose 6-phosphate = beta-D-fructose 6-phosphate. It participates in carbohydrate biosynthesis; gluconeogenesis. The protein operates within carbohydrate degradation; glycolysis; D-glyceraldehyde 3-phosphate and glycerone phosphate from D-glucose: step 2/4. Catalyzes the reversible isomerization of glucose-6-phosphate to fructose-6-phosphate. This chain is Glucose-6-phosphate isomerase, found in Synechococcus sp. (strain JA-2-3B'a(2-13)) (Cyanobacteria bacterium Yellowstone B-Prime).